A 254-amino-acid chain; its full sequence is Proteasome subunit alpha (254 aa).

The disordered stretch occupies residues 231–254; sequence ESGAASADGEAETEAETDSGSDEE. Residues 239–254 are compositionally biased toward acidic residues; that stretch reads GEAETEAETDSGSDEE.

Belongs to the peptidase T1A family. As to quaternary structure, the 20S proteasome core is composed of 14 alpha and 14 beta subunits that assemble into four stacked heptameric rings, resulting in a barrel-shaped structure. The two inner rings, each composed of seven catalytic beta subunits, are sandwiched by two outer rings, each composed of seven alpha subunits. The catalytic chamber with the active sites is on the inside of the barrel. Has probably a gated structure, the ends of the cylinder being occluded by the N-termini of the alpha-subunits. Is likely capped by the proteasome-associated ATPase, ARC. Post-translationally, the N-terminus is blocked.

The protein localises to the cytoplasm. It functions in the pathway protein degradation; proteasomal Pup-dependent pathway. With respect to regulation, the formation of the proteasomal ATPase ARC-20S proteasome complex, likely via the docking of the C-termini of ARC into the intersubunit pockets in the alpha-rings, may trigger opening of the gate for substrate entry. Interconversion between the open-gate and close-gate conformations leads to a dynamic regulation of the 20S proteasome proteolysis activity. Peptidolytic activity is completely inhibited by lactacystin, and to a lesser extent, by N-acetyl-Leu-Leu-norleucinal (Ac-LLnL) and benzoyloxycarbonyl-Leu-Leu-Leu-vinylsulfone (Z-LLL-VS) in vitro. Component of the proteasome core, a large protease complex with broad specificity involved in protein degradation. The S.coelicolor proteasome is able to cleave oligopeptides after hydrophobic residues, but not after basic or acidic residues, thus displaying chymotrypsin-like activity but not trypsin-like activity. The protein is Proteasome subunit alpha of Streptomyces coelicolor (strain ATCC BAA-471 / A3(2) / M145).